The primary structure comprises 694 residues: Voltage-gated chloride channel TMC4 (694 aa).

The disordered stretch occupies residues 1–21 (MEAWGQSPACSSSRKARTGPS). Residues 1–150 (MEAWGQSPAC…GTESYFSLLR (150 aa)) are Extracellular-facing. The chain crosses the membrane as a helical span at residues 151 to 171 (FLLFLNLVASVIEICMKLIPT). Residues 172–231 (WLEGAPPGPPGPNISSPCGSYIPHTHGLVAFPTQLFNLLSGEGYLEWSPLFYGFYPPRSN) are Cytoplasmic-facing. Residues 232–252 (LAITYLCSVFAISVIYLLCIL) form a helical membrane-spanning segment. Topologically, residues 253 to 330 (RRSVSGLKET…SQRAKVWSMR (78 aa)) are extracellular. The chain crosses the membrane as a helical span at residues 331-351 (ALLNVLVLALLGAAFYGIYWA). The Cytoplasmic portion of the chain corresponds to 352-376 (TEYTLTLQETPLVRQTPLFKLLVDY). Residues 377 to 397 (LPSIFISLFNFVLPPVFKFIA) traverse the membrane as a helical segment. At 398–407 (SLEGYTQSRQ) the chain is on the extracellular side. Residues 408–428 (IVLILLRTVFLRLASLVFLLV) form a helical membrane-spanning segment. At 429 to 465 (SLWSQITCGGNMEAEGCKACGYNYKEIPCWETRLGQE) the chain is on the cytoplasmic side. Residues 466–486 (MYKLVLFDLLMGLLVTLLVQF) traverse the membrane as a helical segment. Over 487-513 (PRKILCGLCPGALGRLSGTLEFQVPDE) the chain is Extracellular. The helical transmembrane segment at 514–534 (VLGLIYAQTVVWVGSFFCPLL) threads the bilayer. Residue Pro535 is a topological domain, cytoplasmic. A helical membrane pass occupies residues 536–556 (LINTAKFLILFCLKKITLFSI). Topologically, residues 557–574 (YSPASRTFRASTANFFFP) are extracellular. The chain crosses the membrane as a helical span at residues 575 to 595 (LVLLVGLAISAVPVLYSIFLI). The Cytoplasmic segment spans residues 596–635 (PPSKLCGPFRGKLSIWAQIPEAIESLPQTAQNFLYFLGTQ). The helical transmembrane segment at 636-656 (AFTVPLLILSSILMMYTVALA) threads the bilayer. Residues 657–694 (NCYGRLISELKRQIETEVQNKVFLAQRAVALSSRNGTS) are Extracellular-facing. Asn691 carries N-linked (GlcNAc...) asparagine glycosylation.

This sequence belongs to the TMC family. Expressed in taste bud cells of the posterior tongue. Ubiquitously expressed.

The protein localises to the membrane. It catalyses the reaction chloride(in) = chloride(out). Its function is as follows. Voltage-gated chloride channel involved in high-concentration salt taste sensation. Depolarization induced by high NaCl concentration may trigger the activation of TMC4-mediated chloride influx into taste bud cells, helping the return to resting potential. Also allows permeation of organic anions including gluconate, but their current amplitudes at positive potentials are less than that of chloride. Involved in pH and temperature-dependent modulation of salty taste. This Mus musculus (Mouse) protein is Voltage-gated chloride channel TMC4.